The primary structure comprises 175 residues: Homeobox expressed in ES cells 1 (175 aa).

A disordered region spans residues 1–44 (MSPNLQEGARLVEGKPSSTSFSIESILGLDQKKDDAPSMKPHRP). Positions 108-167 (GRRPRTAFTQNQVEVLENVFRVNCYPGIDIREDLARKLNLEEDRIQIWFQNRRAKLKRSH) form a DNA-binding region, homeobox.

It belongs to the ANF homeobox family. In terms of assembly, interacts with TLE1.

It localises to the nucleus. Its function is as follows. Required for the normal development of the forebrain, eyes and other anterior structures such as the olfactory placodes and pituitary gland. Possible transcriptional repressor. Binds to the palindromic PIII sequence, 5'-AGCTTGAGTCTAATTGAATTAACTGTAC-3'. The sequence is that of Homeobox expressed in ES cells 1 (HESX1) from Oryctolagus cuniculus (Rabbit).